The following is a 967-amino-acid chain: Cytosolic carboxypeptidase 2 (967 aa).

The 272-residue stretch at 330 to 601 (YPYTYSDLQR…HFCDTLLDYC (272 aa)) folds into the Peptidase M14 domain. 3 residues coordinate Zn(2+): His396, Glu399, and His492. Glu565 functions as the Proton donor/acceptor in the catalytic mechanism. Disordered stretches follow at residues 679-706 (KRRL…LHEA) and 944-967 (PGIS…NTMK). Residues 946 to 967 (ISSSEPHFPNSSEDITVRNTMK) show a composition bias toward polar residues.

It belongs to the peptidase M14 family. It depends on Zn(2+) as a cofactor.

The protein resides in the cytoplasm. Its subcellular location is the cytosol. It localises to the cytoskeleton. It is found in the microtubule organizing center. The protein localises to the centrosome. The protein resides in the centriole. Its subcellular location is the cilium basal body. The catalysed reaction is (L-glutamyl)(n+1)-gamma-L-glutamyl-L-glutamyl-[protein] + H2O = (L-glutamyl)(n)-gamma-L-glutamyl-L-glutamyl-[protein] + L-glutamate. Metallocarboxypeptidase that mediates deglutamylation of target proteins. Catalyzes the deglutamylation of polyglutamate side chains generated by post-translational polyglutamylation in proteins such as tubulins. Also removes gene-encoded polyglutamates from the carboxy-terminus of target proteins such as MYLK. Does not show detyrosinase or deglycylase activities from the carboxy-terminus of tubulin. Its function is as follows. Metallocarboxypeptidase that mediates deglutamylation of tubulin and non-tubulin target proteins. Catalyzes the removal of polyglutamate side chains present on the gamma-carboxyl group of glutamate residues within the C-terminal tail of tubulin protein. Specifically cleaves tubulin long-side-chains, while it is not able to remove the branching point glutamate. Also catalyzes the removal of polyglutamate residues from the carboxy-terminus of non-tubulin proteins. This is Cytosolic carboxypeptidase 2 (agbl2) from Xenopus tropicalis (Western clawed frog).